Reading from the N-terminus, the 872-residue chain is Alanine--tRNA ligase (872 aa).

Residues H561, H565, C662, and H666 each coordinate Zn(2+).

The protein belongs to the class-II aminoacyl-tRNA synthetase family. It depends on Zn(2+) as a cofactor.

The protein resides in the cytoplasm. The catalysed reaction is tRNA(Ala) + L-alanine + ATP = L-alanyl-tRNA(Ala) + AMP + diphosphate. Its function is as follows. Catalyzes the attachment of alanine to tRNA(Ala) in a two-step reaction: alanine is first activated by ATP to form Ala-AMP and then transferred to the acceptor end of tRNA(Ala). Also edits incorrectly charged Ser-tRNA(Ala) and Gly-tRNA(Ala) via its editing domain. The chain is Alanine--tRNA ligase from Thiobacillus denitrificans (strain ATCC 25259 / T1).